The primary structure comprises 118 residues: DNA-binding protein Msp_0595 (118 aa).

Low complexity predominate over residues 15–44 (LKQQQLAAQQQQGASLEQMQQEEQARQQFE). The interval 15–45 (LKQQQLAAQQQQGASLEQMQQEEQARQQFEN) is disordered.

Belongs to the PDCD5 family.

The protein is DNA-binding protein Msp_0595 of Methanosphaera stadtmanae (strain ATCC 43021 / DSM 3091 / JCM 11832 / MCB-3).